The chain runs to 277 residues: Collectin-10 (277 aa).

An N-terminal signal peptide occupies residues 1–27; it reads MNGFASLLRRNQFILLVLFLLQIQSLG. The tract at residues 40-107 is disordered; the sequence is ATHTISPGPK…GDKGEKGLLG (68 aa). Positions 49–64 are enriched in basic and acidic residues; that stretch reads KGDDGEKGDPGEEGKH. In terms of domain architecture, Collagen-like spans 53-112; the sequence is GEKGDPGEEGKHGKVGRMGPKGIKGELGDMGDQGNIGKTGPIGKKGDKGEKGLLGIPGEK. The region spanning 155-271 is the C-type lectin domain; it reads TEEKFYYIVQ…CHLTMYFVCE (117 aa). Disulfide bonds link Cys-176–Cys-270 and Cys-248–Cys-262. A glycan (N-linked (GlcNAc...) asparagine) is linked at Asn-258.

Belongs to the COLEC10/COLEC11 family. Highly expressed in liver, placenta and adrenal gland. Moderately expressed in small intestine, lung, stomach and prostate. Weakly expressed in trachea and spleen.

It localises to the secreted. It is found in the golgi apparatus. The protein localises to the cytoplasm. In terms of biological role, lectin that binds to various sugars: galactose &gt; mannose = fucose &gt; N-acetylglucosamine &gt; N-acetylgalactosamine. Acts as a chemoattractant, probably involved in the regulation of cell migration. This chain is Collectin-10 (COLEC10), found in Homo sapiens (Human).